Here is a 439-residue protein sequence, read N- to C-terminus: NAD-dependent malic enzyme 1 (439 aa).

Positions 9-84 (TLMIETPSVP…GIRLHTVSDE (76 aa)) constitute an ACT domain. The Proton donor role is filled by Tyr-112. Lys-167 serves as the catalytic Proton acceptor. A divalent metal cation-binding residues include Glu-209, Asp-210, and Asp-235. Residues 268-271 (LGAA), Asn-347, and Asn-373 each bind NAD(+).

It belongs to the malic enzymes family. Mg(2+) serves as cofactor. Mn(2+) is required as a cofactor.

The enzyme catalyses (S)-malate + NAD(+) = pyruvate + CO2 + NADH. It carries out the reaction oxaloacetate + H(+) = pyruvate + CO2. Its function is as follows. Catalyzes the decarboxylation of malate to pyruvate. Is specific for NAD, cannot use NADP. Can also catalyze the decarboxylation of oxaloacetate. Involved in keeping the ATP levels high. The sequence is that of NAD-dependent malic enzyme 1 from Bacillus subtilis (strain 168).